The following is a 543-amino-acid chain: Hydroxylamine reductase (543 aa).

Positions 3, 6, 15, and 21 each coordinate [4Fe-4S] cluster. Hybrid [4Fe-2O-2S] cluster-binding residues include His-239, Glu-263, Cys-307, Cys-398, Cys-426, Cys-451, Glu-486, and Lys-488. The residue at position 398 (Cys-398) is a Cysteine persulfide.

The protein belongs to the HCP family. The cofactor is [4Fe-4S] cluster. Requires hybrid [4Fe-2O-2S] cluster as cofactor.

Its subcellular location is the cytoplasm. It carries out the reaction A + NH4(+) + H2O = hydroxylamine + AH2 + H(+). Its function is as follows. Catalyzes the reduction of hydroxylamine to form NH(3) and H(2)O. This Methanococcus vannielii (strain ATCC 35089 / DSM 1224 / JCM 13029 / OCM 148 / SB) protein is Hydroxylamine reductase.